The primary structure comprises 418 residues: Tyrosine--tRNA ligase (418 aa).

Position 34 (Tyr-34) interacts with L-tyrosine. A 'HIGH' region motif is present at residues 39 to 48; it reads PTADSLHLGH. 2 residues coordinate L-tyrosine: Tyr-169 and Gln-173. The short motif at 229 to 233 is the 'KMSKS' region element; that stretch reads KFGKS. Lys-232 is an ATP binding site. The 67-residue stretch at 352-418 folds into the S4 RNA-binding domain; that stretch reads LNLVDMLVTA…GKKKYAVLTY (67 aa).

It belongs to the class-I aminoacyl-tRNA synthetase family. TyrS type 1 subfamily. Homodimer.

It is found in the cytoplasm. It catalyses the reaction tRNA(Tyr) + L-tyrosine + ATP = L-tyrosyl-tRNA(Tyr) + AMP + diphosphate + H(+). Functionally, catalyzes the attachment of tyrosine to tRNA(Tyr) in a two-step reaction: tyrosine is first activated by ATP to form Tyr-AMP and then transferred to the acceptor end of tRNA(Tyr). The chain is Tyrosine--tRNA ligase from Streptococcus pyogenes serotype M3 (strain SSI-1).